Consider the following 453-residue polypeptide: Tryptophan biosynthesis protein TrpCF (453 aa).

An indole-3-glycerol phosphate synthase region spans residues 1-257 (MMQTVLAKIV…AAVRRVLLGE (257 aa)). The N-(5'-phosphoribosyl)anthranilate isomerase stretch occupies residues 258–453 (NKVCGLTRGQ…ASVFQTLRAY (196 aa)).

It in the N-terminal section; belongs to the TrpC family. This sequence in the C-terminal section; belongs to the TrpF family. As to quaternary structure, monomer.

The enzyme catalyses N-(5-phospho-beta-D-ribosyl)anthranilate = 1-(2-carboxyphenylamino)-1-deoxy-D-ribulose 5-phosphate. The catalysed reaction is 1-(2-carboxyphenylamino)-1-deoxy-D-ribulose 5-phosphate + H(+) = (1S,2R)-1-C-(indol-3-yl)glycerol 3-phosphate + CO2 + H2O. The protein operates within amino-acid biosynthesis; L-tryptophan biosynthesis; L-tryptophan from chorismate: step 3/5. It participates in amino-acid biosynthesis; L-tryptophan biosynthesis; L-tryptophan from chorismate: step 4/5. Functionally, bifunctional enzyme that catalyzes two sequential steps of tryptophan biosynthetic pathway. The first reaction is catalyzed by the isomerase, coded by the TrpF domain; the second reaction is catalyzed by the synthase, coded by the TrpC domain. In Escherichia coli (strain K12), this protein is Tryptophan biosynthesis protein TrpCF (trpC).